The sequence spans 87 residues: Conotoxin Cl12.3 (87 aa).

The first 19 residues, 1-19 (MKLTCVLVVLLLFLPYGDL), serve as a signal peptide directing secretion. Positions 20-42 (ITNNYIGGAARKVTPWRRNLKTR) are excised as a propeptide.

This sequence belongs to the conotoxin O1 superfamily. Contains 4 disulfide bonds. In terms of tissue distribution, expressed by the venom duct.

Its subcellular location is the secreted. In Californiconus californicus (California cone), this protein is Conotoxin Cl12.3.